Reading from the N-terminus, the 380-residue chain is Cell division protein FtsZ 2 (380 aa).

Residues 47-51, 134-136, E165, R168, and D211 contribute to the GTP site; these read GAGNN and GTG.

The protein belongs to the FtsZ family. In terms of assembly, homodimer. Polymerizes to form a dynamic ring structure in a strictly GTP-dependent manner. Interacts directly with several other division proteins.

The protein resides in the cytoplasm. Functionally, essential cell division protein that forms a contractile ring structure (Z ring) at the future cell division site. The regulation of the ring assembly controls the timing and the location of cell division. One of the functions of the FtsZ ring is to recruit other cell division proteins to the septum to produce a new cell wall between the dividing cells. Binds GTP and shows GTPase activity. The chain is Cell division protein FtsZ 2 from Methanocaldococcus jannaschii (strain ATCC 43067 / DSM 2661 / JAL-1 / JCM 10045 / NBRC 100440) (Methanococcus jannaschii).